Reading from the N-terminus, the 148-residue chain is Transcriptional regulator MraZ (148 aa).

2 consecutive SpoVT-AbrB domains span residues 5–53 (ETAI…AESE) and 82–125 (AAHL…SEQA).

This sequence belongs to the MraZ family. In terms of assembly, forms oligomers.

It is found in the cytoplasm. The protein resides in the nucleoid. This is Transcriptional regulator MraZ from Stenotrophomonas maltophilia (strain R551-3).